Here is a 227-residue protein sequence, read N- to C-terminus: Prolactin (227 aa).

An N-terminal signal peptide occupies residues 1 to 28 (MDSKWSRRTGSLLLLLVSNLLLCKSTAS). A disulfide bond links C32 and C39. Residues S54, S62, and S118 each carry the phosphoserine modification. Disulfide bonds link C86/C202 and C219/C227.

This sequence belongs to the somatotropin/prolactin family. As to quaternary structure, interacts with PRLR.

It localises to the secreted. In terms of biological role, prolactin acts primarily on the mammary gland by promoting lactation. This chain is Prolactin (PRL), found in Oryctolagus cuniculus (Rabbit).